The sequence spans 286 residues: Thymidylate synthase (286 aa).

Arg140–Arg141 serves as a coordination point for dUMP. Cys161 (nucleophile) is an active-site residue. Residues Arg185 to Asp188, Asn196, and His226 to Tyr228 each bind dUMP. Asp188 serves as a coordination point for (6R)-5,10-methylene-5,6,7,8-tetrahydrofolate. Residue Ala285 coordinates (6R)-5,10-methylene-5,6,7,8-tetrahydrofolate.

This sequence belongs to the thymidylate synthase family. Bacterial-type ThyA subfamily. As to quaternary structure, homodimer.

It is found in the cytoplasm. It catalyses the reaction dUMP + (6R)-5,10-methylene-5,6,7,8-tetrahydrofolate = 7,8-dihydrofolate + dTMP. Its pathway is pyrimidine metabolism; dTTP biosynthesis. Functionally, catalyzes the reductive methylation of 2'-deoxyuridine-5'-monophosphate (dUMP) to 2'-deoxythymidine-5'-monophosphate (dTMP) while utilizing 5,10-methylenetetrahydrofolate (mTHF) as the methyl donor and reductant in the reaction, yielding dihydrofolate (DHF) as a by-product. This enzymatic reaction provides an intracellular de novo source of dTMP, an essential precursor for DNA biosynthesis. The polypeptide is Thymidylate synthase (Streptococcus thermophilus (strain CNRZ 1066)).